We begin with the raw amino-acid sequence, 320 residues long: MQSVKSGVLLVNLGTPQAPTPAAVKRYLKQFLSDRRVVDVPRFIWWPLLRGVILPLRSPRVAKLYKSIWMEEGSPLMVYSRRQEKALSAALGDVPVALGMSYGQPSLDSAVQKLLDQHVDHIIVLALYPQYSCSTVAAVWDELARITARYRKLPSMTLIRDYACEPAYISALAQSVQRSFEKHGEPDLLLLSYHGIPQRYADEGDDYPQRCRDTTRELVSALGIAPEKVMMTFQSRFGREPWLTPYTDETMKMLGEKGVKHIQVMCPGFSSDCLETLEEIAEQNREIFIEAGGEKYEYIPALNDEPAHIAMMKELVDRYR.

Positions 194 and 275 each coordinate Fe cation.

This sequence belongs to the ferrochelatase family.

It localises to the cytoplasm. The enzyme catalyses heme b + 2 H(+) = protoporphyrin IX + Fe(2+). The protein operates within porphyrin-containing compound metabolism; protoheme biosynthesis; protoheme from protoporphyrin-IX: step 1/1. Catalyzes the ferrous insertion into protoporphyrin IX. The sequence is that of Ferrochelatase from Cronobacter sakazakii (strain ATCC BAA-894) (Enterobacter sakazakii).